A 90-amino-acid polypeptide reads, in one-letter code: Chromosomal protein MC1c (90 aa).

Its function is as follows. Protects DNA against thermal denaturation and modulates transcription. The polypeptide is Chromosomal protein MC1c (Methanothrix soehngenii (Methanosaeta concilii)).